The sequence spans 252 residues: tRNA uridine(34) hydroxylase (252 aa).

Residues 129–223 form the Rhodanese domain; the sequence is QGRPVVMLDT…YFEETGGKGF (95 aa). The active-site Cysteine persulfide intermediate is the cysteine 183.

It belongs to the TrhO family.

The enzyme catalyses uridine(34) in tRNA + AH2 + O2 = 5-hydroxyuridine(34) in tRNA + A + H2O. Functionally, catalyzes oxygen-dependent 5-hydroxyuridine (ho5U) modification at position 34 in tRNAs. This Bordetella petrii (strain ATCC BAA-461 / DSM 12804 / CCUG 43448) protein is tRNA uridine(34) hydroxylase.